Consider the following 280-residue polypeptide: Probable aquaporin PIP2-8 (280 aa).

The interval 1 to 21 (MAAGSGSGSNPKDYQDPPPAP) is disordered. A run of 2 helical transmembrane segments spans residues 36–56 (AAIA…STVI) and 70–92 (LGIA…GISG). Residues 96–98 (NPA) carry the NPA 1 motif. The next 3 helical transmembrane spans lie at 113–135 (RAAL…ARAM), 156–176 (SAGA…YTVF), and 192–212 (VLAP…TIPI). An NPA 2 motif is present at residues 218–220 (NPA). Residues 236–256 (AWSHLWIFWVGPFAGAAAAMI) traverse the membrane as a helical segment.

Belongs to the MIP/aquaporin (TC 1.A.8) family. PIP (TC 1.A.8.11) subfamily. In terms of tissue distribution, expressed in leaves and at lower levels in roots.

It is found in the cell membrane. Aquaporins facilitate the transport of water and small neutral solutes across cell membranes. This is Probable aquaporin PIP2-8 (PIP2-8) from Oryza sativa subsp. japonica (Rice).